The sequence spans 138 residues: Ribonuclease kappa-A (138 aa).

The signal sequence occupies residues 1-24 (MVLYFSPVLTFFLANFFNSKSTTT). Residues 25–75 (ENLQVFLVENQHRDSKRKINPTFSKKGIEVRQQNENLWSKIVALRFDYSVW) are Extracellular-facing. The helical transmembrane segment at 76-96 (GIIQLVLMMGLFFYINSVALI) threads the bilayer. At 97–138 (EDLPIDEEFNSVEEFYTAATSAYNQNAYTVGLPVHLCAYASI) the chain is on the cytoplasmic side.

The protein belongs to the RNase K family.

Its subcellular location is the membrane. In terms of biological role, endoribonuclease. The protein is Ribonuclease kappa-A of Ceratitis capitata (Mediterranean fruit fly).